The sequence spans 85 residues: Probable small nuclear ribonucleoprotein G (85 aa).

Residues 6–78 form the Sm domain; sequence QADPDLTKLL…ILLMEPLESM (73 aa).

This sequence belongs to the snRNP Sm proteins family. In terms of assembly, core component of the spliceosomal U1, U2, U4 and U5 small nuclear ribonucleoproteins (snRNPs), the building blocks of the spliceosome. Most spliceosomal snRNPs contain a common set of Sm proteins, SNRPB, SNRPD1, SNRPD2, SNRPD3, SNRPE, SNRPF and SNRPG that assemble in a heptameric protein ring on the Sm site of the small nuclear RNA to form the core snRNP. Component of the U1 snRNP. Component of the U4/U6-U5 tri-snRNP complex. Component of the U7 snRNP complex. Component of the U11/U12 snRNPs that are part of the U12-type spliceosome.

The protein resides in the cytoplasm. Its subcellular location is the cytosol. The protein localises to the nucleus. Functionally, plays a role in pre-mRNA splicing as a core component of the spliceosomal U1, U2, U4 and U5 small nuclear ribonucleoproteins (snRNPs), the building blocks of the spliceosome. Component of both the pre-catalytic spliceosome B complex and activated spliceosome C complexes. Is also a component of the minor U12 spliceosome. The protein is Probable small nuclear ribonucleoprotein G (snrpG) of Dictyostelium discoideum (Social amoeba).